A 659-amino-acid chain; its full sequence is Exoribonuclease 2 (659 aa).

In terms of domain architecture, RNB spans 189–531 (RENLTALHFV…NHRLIKAVLA (343 aa)). The 83-residue stretch at 576-658 (NAEFEAEVQD…ATRSIVGEIL (83 aa)) folds into the S1 motif domain.

This sequence belongs to the RNR ribonuclease family. RNase II subfamily.

It localises to the cytoplasm. It catalyses the reaction Exonucleolytic cleavage in the 3'- to 5'-direction to yield nucleoside 5'-phosphates.. Involved in mRNA degradation. Hydrolyzes single-stranded polyribonucleotides processively in the 3' to 5' direction. The chain is Exoribonuclease 2 from Haemophilus influenzae (strain PittGG).